A 190-amino-acid polypeptide reads, in one-letter code: Outer-membrane lipoprotein LolB (190 aa).

Positions 1-16 are cleaved as a signal peptide; the sequence is MRLRFSLLLTVSLLAG. A lipid anchor (N-palmitoyl cysteine) is attached at cysteine 17. Residue cysteine 17 is the site of S-diacylglycerol cysteine attachment.

It belongs to the LolB family. Monomer.

It is found in the cell outer membrane. Plays a critical role in the incorporation of lipoproteins in the outer membrane after they are released by the LolA protein. This Dechloromonas aromatica (strain RCB) protein is Outer-membrane lipoprotein LolB.